The following is a 348-amino-acid chain: Putative olfactory receptor 3A4 (348 aa).

Topologically, residues 1–28 are extracellular; sequence MDLGNSGNDSVVTKFVLLGLTETAALQP. N-linked (GlcNAc...) asparagine glycosylation is present at N8. The helical transmembrane segment at 29–52 threads the bilayer; sequence ILFVIFLLAYVTTIGGTLSILAAI. Residues 53-60 lie on the Cytoplasmic side of the membrane; that stretch reads LMETKLHS. A helical transmembrane segment spans residues 61-82; that stretch reads PMYFFLGNLSLPDVGCVSVTVP. The Extracellular segment spans residues 83–103; the sequence is AMLSHFISNDRSIPYKACLSE. C100 and C192 are oxidised to a cystine. Residues 104 to 123 traverse the membrane as a helical segment; the sequence is LFFFHLLAGADCFLLTIMAY. The Cytoplasmic portion of the chain corresponds to 124–143; sequence DRYLAICQSLTYSSRMSWGI. The helical transmembrane segment at 144–161 threads the bilayer; it reads QQALVGMSCVFSFTNALT. The Extracellular segment spans residues 162–199; the sequence is QTVALSPLNFCGPNVINHFYCDLPQPFQLSCSSVHLNG. Residues 200-222 traverse the membrane as a helical segment; it reads QLLFVAAAFMGVAPLVLITVSYA. The Cytoplasmic segment spans residues 223–239; it reads HVAAAVLRIRSAEGRKK. Residues 240-262 traverse the membrane as a helical segment; that stretch reads AFSTCSSHLTVVGIFYGTGVFSY. Residues 263-275 are Extracellular-facing; the sequence is TRLGSVESSDKDK. The chain crosses the membrane as a helical span at residues 276–295; it reads GIGILNTVISPMLNPLIYWT. The Cytoplasmic segment spans residues 296–348; that stretch reads SLLDVGCISHCSSDAGVSPGPPVQSSLCCLQFTALLSPPPGWGGLSPLNSHGL.

This sequence belongs to the G-protein coupled receptor 1 family.

Its subcellular location is the cell membrane. Functionally, odorant receptor. The polypeptide is Putative olfactory receptor 3A4 (OR3A4P) (Homo sapiens (Human)).